Consider the following 114-residue polypeptide: Large ribosomal subunit protein uL22 (114 aa).

It belongs to the universal ribosomal protein uL22 family. In terms of assembly, part of the 50S ribosomal subunit.

This protein binds specifically to 23S rRNA; its binding is stimulated by other ribosomal proteins, e.g. L4, L17, and L20. It is important during the early stages of 50S assembly. It makes multiple contacts with different domains of the 23S rRNA in the assembled 50S subunit and ribosome. Functionally, the globular domain of the protein is located near the polypeptide exit tunnel on the outside of the subunit, while an extended beta-hairpin is found that lines the wall of the exit tunnel in the center of the 70S ribosome. This Bacillus licheniformis (strain ATCC 14580 / DSM 13 / JCM 2505 / CCUG 7422 / NBRC 12200 / NCIMB 9375 / NCTC 10341 / NRRL NRS-1264 / Gibson 46) protein is Large ribosomal subunit protein uL22.